Reading from the N-terminus, the 459-residue chain is Methionine aminopeptidase 2-2 (459 aa).

Residues 1-12 (MGSKSPEDHRQG) show a composition bias toward basic and acidic residues. Residues 1-87 (MGSKSPEDHR…KKLSVVQQTS (87 aa)) form a disordered region. The segment covering 43-54 (GQDEDGDDDDDE) has biased composition (acidic residues). Basic and acidic residues predominate over residues 55-66 (KTGIDLKTNDGA). Basic residues predominate over residues 67–79 (KKKRKRNKKKSKK). Residue histidine 210 coordinates substrate. Residues aspartate 231, aspartate 242, and histidine 311 each coordinate a divalent metal cation. Position 319 (histidine 319) interacts with substrate. The a divalent metal cation site is built by glutamate 344 and glutamate 440.

The protein belongs to the peptidase M24A family. Methionine aminopeptidase eukaryotic type 2 subfamily. Co(2+) is required as a cofactor. Zn(2+) serves as cofactor. It depends on Mn(2+) as a cofactor. Requires Fe(2+) as cofactor.

The protein localises to the cytoplasm. The catalysed reaction is Release of N-terminal amino acids, preferentially methionine, from peptides and arylamides.. Its function is as follows. Cotranslationally removes the N-terminal methionine from nascent proteins. The N-terminal methionine is often cleaved when the second residue in the primary sequence is small and uncharged (Met-Ala-, Cys, Gly, Pro, Ser, Thr, or Val). The chain is Methionine aminopeptidase 2-2 from Pyrenophora teres f. teres (strain 0-1) (Barley net blotch fungus).